A 297-amino-acid polypeptide reads, in one-letter code: UDP-N-acetylenolpyruvoylglucosamine reductase (297 aa).

An FAD-binding PCMH-type domain is found at 27-191; sequence TGGNADIFVM…LDATFSLELE (165 aa). Residue R170 is part of the active site. S220 (proton donor) is an active-site residue. The active site involves E290.

It belongs to the MurB family. The cofactor is FAD.

It is found in the cytoplasm. It carries out the reaction UDP-N-acetyl-alpha-D-muramate + NADP(+) = UDP-N-acetyl-3-O-(1-carboxyvinyl)-alpha-D-glucosamine + NADPH + H(+). Its pathway is cell wall biogenesis; peptidoglycan biosynthesis. Its function is as follows. Cell wall formation. This is UDP-N-acetylenolpyruvoylglucosamine reductase from Listeria welshimeri serovar 6b (strain ATCC 35897 / DSM 20650 / CCUG 15529 / CIP 8149 / NCTC 11857 / SLCC 5334 / V8).